The primary structure comprises 379 residues: Cobalt-precorrin-5B C(1)-methyltransferase (379 aa).

The protein belongs to the CbiD family.

The enzyme catalyses Co-precorrin-5B + S-adenosyl-L-methionine = Co-precorrin-6A + S-adenosyl-L-homocysteine. It functions in the pathway cofactor biosynthesis; adenosylcobalamin biosynthesis; cob(II)yrinate a,c-diamide from sirohydrochlorin (anaerobic route): step 6/10. Its function is as follows. Catalyzes the methylation of C-1 in cobalt-precorrin-5B to form cobalt-precorrin-6A. The protein is Cobalt-precorrin-5B C(1)-methyltransferase of Salmonella schwarzengrund (strain CVM19633).